The primary structure comprises 396 residues: Elongation factor Tu 2 (396 aa).

Positions 10–206 (KPHCNIGTIG…AVDAYIPQPE (197 aa)) constitute a tr-type G domain. The tract at residues 19-26 (GHVDHGKT) is G1. 19 to 26 (GHVDHGKT) lines the GTP pocket. Residue T26 coordinates Mg(2+). The G2 stretch occupies residues 60–64 (GITIS). Positions 81-84 (DCPG) are G3. GTP is bound by residues 81 to 85 (DCPGH) and 136 to 139 (NKCD). The G4 stretch occupies residues 136–139 (NKCD). The G5 stretch occupies residues 174 to 176 (SAL).

This sequence belongs to the TRAFAC class translation factor GTPase superfamily. Classic translation factor GTPase family. EF-Tu/EF-1A subfamily. As to quaternary structure, monomer.

It localises to the cytoplasm. It catalyses the reaction GTP + H2O = GDP + phosphate + H(+). In terms of biological role, GTP hydrolase that promotes the GTP-dependent binding of aminoacyl-tRNA to the A-site of ribosomes during protein biosynthesis. The chain is Elongation factor Tu 2 from Rhodopseudomonas palustris (strain BisB5).